The following is a 285-amino-acid chain: Non-homologous end joining protein Ku (285 aa).

The region spanning 9 to 176 (ISFGLVNVPV…PAEIRHLEAS (168 aa)) is the Ku domain. The segment at 250–285 (AMTDQKKQQNTAESETEEKPTKSTLTPRGRRKVKGA) is disordered.

Belongs to the prokaryotic Ku family. As to quaternary structure, homodimer. Interacts with LigD.

In terms of biological role, with LigD forms a non-homologous end joining (NHEJ) DNA repair enzyme, which repairs dsDNA breaks with reduced fidelity. Binds linear dsDNA with 5'- and 3'- overhangs but not closed circular dsDNA nor ssDNA. Recruits and stimulates the ligase activity of LigD. This chain is Non-homologous end joining protein Ku, found in Desulfitobacterium hafniense (strain DSM 10664 / DCB-2).